Consider the following 167-residue polypeptide: Peptidyl-prolyl cis-trans isomerase-like 3 (167 aa).

The region spanning 1-160 is the PPIase cyclophilin-type domain; sequence MSVTLHTSHG…EPVRIENVTI (160 aa).

Belongs to the cyclophilin-type PPIase family. PPIL3 subfamily.

It carries out the reaction [protein]-peptidylproline (omega=180) = [protein]-peptidylproline (omega=0). Its function is as follows. PPIases accelerate the folding of proteins. It catalyzes the cis-trans isomerization of proline imidic peptide bonds in oligopeptides. The sequence is that of Peptidyl-prolyl cis-trans isomerase-like 3 (CYP10) from Gibberella zeae (strain ATCC MYA-4620 / CBS 123657 / FGSC 9075 / NRRL 31084 / PH-1) (Wheat head blight fungus).